A 790-amino-acid chain; its full sequence is Probable E3 ubiquitin-protein ligase MARCHF10 (790 aa).

The disordered stretch occupies residues 33 to 240; sequence LKRQEHKKEP…PQNEPHTALS (208 aa). The span at 34 to 48 shows a compositional bias: basic and acidic residues; sequence KRQEHKKEPNEKKQE. Residues 61 to 70 show a composition bias toward low complexity; that stretch reads FSSGSSCKQS. At Ser78 the chain carries Phosphoserine. Residues 218–227 are compositionally biased toward basic and acidic residues; sequence PLERQKKGDP. Over residues 230–240 the composition is skewed to polar residues; it reads RPQNEPHTALS. Positions 284–308 form a coiled coil; sequence LSLNNEQENYDTEEETRTEEELLLA. Disordered regions lie at residues 323 to 416 and 507 to 569; these read GTSA…EDVS and LSPI…RHLQ. Composition is skewed to polar residues over residues 355–370, 406–416, and 511–520; these read RKTSVTEPTTKQSSPG, GVTQVSAEDVS, and RNRNPSAASE. Residues 521–533 show a composition bias toward basic and acidic residues; it reads SHSEDTQGEEERA. A compositionally biased stretch (polar residues) spans 534–563; it reads STSQAQESPLLSDLPNPQSSMALGDSPSSP. The RING-CH-type zinc-finger motif lies at 633–703; sequence DSEEEGDLCR…EMCKQGLLVD (71 aa). Zn(2+) is bound by residues Cys641, Cys644, Cys659, Cys661, His669, Cys672, Cys693, and Cys696. Residues 757 to 790 are disordered; it reads ERMSRNYPQPRPEESESSESGDGNESNVYPGRVI. Over residues 774–783 the composition is skewed to low complexity; that stretch reads SESGDGNESN.

The catalysed reaction is S-ubiquitinyl-[E2 ubiquitin-conjugating enzyme]-L-cysteine + [acceptor protein]-L-lysine = [E2 ubiquitin-conjugating enzyme]-L-cysteine + N(6)-ubiquitinyl-[acceptor protein]-L-lysine.. It participates in protein modification; protein ubiquitination. Its function is as follows. E3 ubiquitin-protein ligase. E3 ubiquitin ligases accept ubiquitin from an E2 ubiquitin-conjugating enzyme in the form of a thioester and then directly transfer the ubiquitin to targeted substrates. This Rattus norvegicus (Rat) protein is Probable E3 ubiquitin-protein ligase MARCHF10 (Marchf10).